Here is a 335-residue protein sequence, read N- to C-terminus: Urokinase plasminogen activator surface receptor (335 aa).

A signal peptide spans 1–22; that stretch reads MGHPLLLPLLLLLHTCVPASWG. UPAR/Ly6 domains are found at residues 23-114, 115-213, and 214-305; these read LRCM…RSRY, LECI…PQNG, and HQCY…YRKG. Disulfide bonds link C25-C46, C28-C34, and C39-C67. N-linked (GlcNAc...) asparagine glycosylation occurs at N74. 11 disulfides stabilise this stretch: C93–C98, C117–C144, C120–C127, C137–C169, C175–C192, C193–C198, C216–C244, C219–C227, C237–C263, C269–C287, and C288–C293. N184, N194, N222, and N255 each carry an N-linked (GlcNAc...) asparagine glycan. G305 is lipidated: GPI-anchor amidated glycine. Positions 306-335 are cleaved as a propeptide — removed in mature form; that stretch reads AAPQPGPAHLSLTITLLMTARLWGGTLLWT.

As to quaternary structure, monomer. Interacts (via the UPAR/Ly6 domains) with SRPX2. Interacts with MRC2. Interacts with FAP (seprase); the interaction occurs at the cell surface of invadopodia membrane. Interacts with SORL1 (via N-terminal ectodomain); this interaction decreases PLAUR internalization. The ternary complex composed of PLAUR-PLAU-SERPINE1 also interacts with SORL1.

The protein localises to the cell membrane. It localises to the cell projection. Its subcellular location is the invadopodium membrane. Acts as a receptor for urokinase plasminogen activator. Plays a role in localizing and promoting plasmin formation. Mediates the proteolysis-independent signal transduction activation effects of U-PA. It is subject to negative-feedback regulation by U-PA which cleaves it into an inactive form. This is Urokinase plasminogen activator surface receptor (PLAUR) from Chlorocebus aethiops (Green monkey).